The primary structure comprises 205 residues: Ribosomal RNA small subunit methyltransferase G (205 aa).

Residues Gly66, Phe71, 119–120 (IE), and Arg135 contribute to the S-adenosyl-L-methionine site.

Belongs to the methyltransferase superfamily. RNA methyltransferase RsmG family.

Its subcellular location is the cytoplasm. The enzyme catalyses guanosine(527) in 16S rRNA + S-adenosyl-L-methionine = N(7)-methylguanosine(527) in 16S rRNA + S-adenosyl-L-homocysteine. In terms of biological role, specifically methylates the N7 position of guanine in position 527 of 16S rRNA. This is Ribosomal RNA small subunit methyltransferase G from Rhizobium leguminosarum bv. trifolii (strain WSM2304).